Reading from the N-terminus, the 422-residue chain is Histidine--tRNA ligase (422 aa).

This sequence belongs to the class-II aminoacyl-tRNA synthetase family. As to quaternary structure, homodimer.

It localises to the cytoplasm. The catalysed reaction is tRNA(His) + L-histidine + ATP = L-histidyl-tRNA(His) + AMP + diphosphate + H(+). This is Histidine--tRNA ligase from Vibrio atlanticus (strain LGP32) (Vibrio splendidus (strain Mel32)).